We begin with the raw amino-acid sequence, 276 residues long: Large ribosomal subunit protein uL2 (276 aa).

Positions 224–254 are disordered; it reads VMNPVDHPHGGGEGRTSGGRHPVTPWGVPTK.

Belongs to the universal ribosomal protein uL2 family. Part of the 50S ribosomal subunit. Forms a bridge to the 30S subunit in the 70S ribosome.

Functionally, one of the primary rRNA binding proteins. Required for association of the 30S and 50S subunits to form the 70S ribosome, for tRNA binding and peptide bond formation. It has been suggested to have peptidyltransferase activity; this is somewhat controversial. Makes several contacts with the 16S rRNA in the 70S ribosome. The polypeptide is Large ribosomal subunit protein uL2 (Gluconobacter oxydans (strain 621H) (Gluconobacter suboxydans)).